We begin with the raw amino-acid sequence, 420 residues long: Histidine--tRNA ligase (420 aa).

This sequence belongs to the class-II aminoacyl-tRNA synthetase family. As to quaternary structure, homodimer.

Its subcellular location is the cytoplasm. It catalyses the reaction tRNA(His) + L-histidine + ATP = L-histidyl-tRNA(His) + AMP + diphosphate + H(+). This is Histidine--tRNA ligase from Macrococcus caseolyticus (strain JCSC5402) (Macrococcoides caseolyticum).